The sequence spans 385 residues: tRNA N6-adenosine threonylcarbamoyltransferase (385 aa).

Residues H140, H144, and Y161 each contribute to the a divalent metal cation site. Substrate is bound by residues 161-165, D193, G208, E212, and N314; that span reads YVSGG. D343 is a binding site for a divalent metal cation.

The protein belongs to the KAE1 / TsaD family. Component of the EKC/KEOPS complex composed of at least BUD32, CGI121, GON7, KAE1 and PCC1; the whole complex dimerizes. Requires a divalent metal cation as cofactor.

The protein localises to the cytoplasm. It localises to the nucleus. It carries out the reaction L-threonylcarbamoyladenylate + adenosine(37) in tRNA = N(6)-L-threonylcarbamoyladenosine(37) in tRNA + AMP + H(+). Its function is as follows. Component of the EKC/KEOPS complex that is required for the formation of a threonylcarbamoyl group on adenosine at position 37 (t(6)A37) in tRNAs that read codons beginning with adenine. The complex is probably involved in the transfer of the threonylcarbamoyl moiety of threonylcarbamoyl-AMP (TC-AMP) to the N6 group of A37. KAE1 likely plays a direct catalytic role in this reaction, but requires other protein(s) of the complex to fulfill this activity. The EKC/KEOPS complex also promotes both telomere uncapping and telomere elongation. The complex is required for efficient recruitment of transcriptional coactivators. In Eremothecium gossypii (strain ATCC 10895 / CBS 109.51 / FGSC 9923 / NRRL Y-1056) (Yeast), this protein is tRNA N6-adenosine threonylcarbamoyltransferase.